The chain runs to 269 residues: Phosphonoacetaldehyde hydrolase (269 aa).

Asp10 acts as the Nucleophile in catalysis. Mg(2+) is bound by residues Asp10 and Ala12. Lys52 serves as the catalytic Schiff-base intermediate with substrate. A Mg(2+)-binding site is contributed by Asp186.

Belongs to the HAD-like hydrolase superfamily. PhnX family. Homodimer. Requires Mg(2+) as cofactor.

It catalyses the reaction phosphonoacetaldehyde + H2O = acetaldehyde + phosphate + H(+). In terms of biological role, involved in phosphonate degradation. The polypeptide is Phosphonoacetaldehyde hydrolase (Salmonella agona (strain SL483)).